Consider the following 318-residue polypeptide: MKSLNIIFAGTPDFAARHLQALLNSQHNVIGVYTQPDRPAGRGKKLTASPVKELAIANNIPVFQPGSLRKEPAQQELAALNADIMVVVAYGLILPKVVLDTPRLGCINVHGSILPRWRGAAPIQRALWAGDKETGVTIMQMDVGLDTGDMLLKTYLPIEDNDTSASLYEKLAEQGPIALLQALEGLTNGTLAAEKQDEALANYAEKLSKEEARLDWNKSAKQLWQEVRAFNPWPVSYFEHQGNTIKVWQAHVSETISTAAPGTIISASKKGIEVATADGVLTLLSMQLPGKNPLNVADILNARGEWFSPNTRLANEAE.

Position 112–115 (112–115 (SILP)) interacts with (6S)-5,6,7,8-tetrahydrofolate.

It belongs to the Fmt family.

It catalyses the reaction L-methionyl-tRNA(fMet) + (6R)-10-formyltetrahydrofolate = N-formyl-L-methionyl-tRNA(fMet) + (6S)-5,6,7,8-tetrahydrofolate + H(+). In terms of biological role, attaches a formyl group to the free amino group of methionyl-tRNA(fMet). The formyl group appears to play a dual role in the initiator identity of N-formylmethionyl-tRNA by promoting its recognition by IF2 and preventing the misappropriation of this tRNA by the elongation apparatus. In Shewanella putrefaciens (strain CN-32 / ATCC BAA-453), this protein is Methionyl-tRNA formyltransferase.